Consider the following 372-residue polypeptide: Protein RecA (372 aa).

Position 81 to 88 (81 to 88 (GPESSGKT)) interacts with ATP.

This sequence belongs to the RecA family.

The protein localises to the cytoplasm. Can catalyze the hydrolysis of ATP in the presence of single-stranded DNA, the ATP-dependent uptake of single-stranded DNA by duplex DNA, and the ATP-dependent hybridization of homologous single-stranded DNAs. It interacts with LexA causing its activation and leading to its autocatalytic cleavage. This is Protein RecA from Haemophilus ducreyi (strain 35000HP / ATCC 700724).